The following is a 101-amino-acid chain: Integration host factor subunit alpha (101 aa).

It belongs to the bacterial histone-like protein family. As to quaternary structure, heterodimer of an alpha and a beta chain.

Its function is as follows. This protein is one of the two subunits of integration host factor, a specific DNA-binding protein that functions in genetic recombination as well as in transcriptional and translational control. This chain is Integration host factor subunit alpha, found in Maricaulis maris (strain MCS10) (Caulobacter maris).